Consider the following 351-residue polypeptide: Photosystem II D2 protein (351 aa).

The chain crosses the membrane as a helical span at residues Cys39–Thr59. Position 116 (His116) interacts with chlorophyll a. A helical transmembrane segment spans residues Gly123–Pro139. Positions 128 and 141 each coordinate pheophytin a. The chain crosses the membrane as a helical span at residues Val151–Ser164. Residue His196 participates in chlorophyll a binding. Residues Gly206 to Glu226 form a helical membrane-spanning segment. Residues His213 and Phe260 each coordinate a plastoquinone. Residue His213 coordinates Fe cation. His267 serves as a coordination point for Fe cation. A helical membrane pass occupies residues Gly277–Arg293.

The protein belongs to the reaction center PufL/M/PsbA/D family. PSII is composed of 1 copy each of membrane proteins PsbA, PsbB, PsbC, PsbD, PsbE, PsbF, PsbH, PsbI, PsbJ, PsbK, PsbL, PsbM, PsbT, PsbX, PsbY, PsbZ, Psb30/Ycf12, peripheral proteins PsbO, CyanoQ (PsbQ), PsbU, PsbV and a large number of cofactors. It forms dimeric complexes. It depends on The D1/D2 heterodimer binds P680, chlorophylls that are the primary electron donor of PSII, and subsequent electron acceptors. It shares a non-heme iron and each subunit binds pheophytin, quinone, additional chlorophylls, carotenoids and lipids. There is also a Cl(-1) ion associated with D1 and D2, which is required for oxygen evolution. The PSII complex binds additional chlorophylls, carotenoids and specific lipids. as a cofactor.

The protein localises to the cellular thylakoid membrane. The enzyme catalyses 2 a plastoquinone + 4 hnu + 2 H2O = 2 a plastoquinol + O2. Photosystem II (PSII) is a light-driven water:plastoquinone oxidoreductase that uses light energy to abstract electrons from H(2)O, generating O(2) and a proton gradient subsequently used for ATP formation. It consists of a core antenna complex that captures photons, and an electron transfer chain that converts photonic excitation into a charge separation. The D1/D2 (PsbA/PsbD) reaction center heterodimer binds P680, the primary electron donor of PSII as well as several subsequent electron acceptors. D2 is needed for assembly of a stable PSII complex. In Crocosphaera subtropica (strain ATCC 51142 / BH68) (Cyanothece sp. (strain ATCC 51142)), this protein is Photosystem II D2 protein.